Consider the following 792-residue polypeptide: Kinesin-like protein KIF3C (792 aa).

In terms of domain architecture, Kinesin motor spans 10-363 (ALKVVARCRP…LRFANRAKNI (354 aa)). 97-104 (GQTGTGKT) contributes to the ATP binding site. Disordered regions lie at residues 249 to 287 (GSER…RPKE), 397 to 418 (MLGK…APAG), and 749 to 792 (RPST…LDHE). The span at 257–268 (GPNTTGGTATQP) shows a compositional bias: low complexity. Positions 269–282 (TGGGGGGGGGGGGG) are enriched in gly residues. A coiled-coil region spans residues 374-627 (KDTLLREFQE…QNEQTRELKL (254 aa)). Over residues 397 to 412 (MLGKRLRRKSSRRKKA) the composition is skewed to basic residues. Positions 628-792 (KYLIIENFIP…LRPTTVLDHE (165 aa)) are globular. The span at 773–792 (AHASLAASAALRPTTVLDHE) shows a compositional bias: low complexity.

This sequence belongs to the TRAFAC class myosin-kinesin ATPase superfamily. Kinesin family. Kinesin II subfamily. In terms of assembly, heterodimer of KIF3A and KIF3C.

The protein resides in the cytoplasm. It is found in the cytoskeleton. Functionally, microtubule-based anterograde translocator for membranous organelles. The sequence is that of Kinesin-like protein KIF3C (KIF3C) from Bos taurus (Bovine).